The chain runs to 883 residues: Putative GTP diphosphokinase RSH1, chloroplastic (883 aa).

Residues 1 to 55 (MTSASSMSVSVECVNICNLTKGDGNARSDCSALSCAWKAPRALTGFLASTAHPPV) constitute a chloroplast transit peptide. Residues 172–279 (FIIHPVAVAR…VKLADRLHNM (108 aa)) form the HD domain. The TGS domain maps to 562–625 (LGSRVFVFTP…ENAEVVEIVT (64 aa)). Residues 710 to 726 (QSQDKSRDTTPAPQNGS) show a composition bias toward polar residues. A disordered region spans residues 710–746 (QSQDKSRDTTPAPQNGSVWAPKVNGKHNKAIKNSSSD). The ACT domain maps to 796–867 (WLCVVSMDRK…LVLGVLGWSS (72 aa)).

Belongs to the RelA/SpoT family. In terms of assembly, interacts with RPP5.

Its subcellular location is the plastid. It is found in the chloroplast. The catalysed reaction is GTP + ATP = guanosine 3'-diphosphate 5'-triphosphate + AMP. Its function is as follows. May be involved in a rapid plant ppGpp (guanosine 3'-diphosphate 5'-diphosphate)-mediated response to pathogens and other stresses. The protein is Putative GTP diphosphokinase RSH1, chloroplastic (RSH1) of Arabidopsis thaliana (Mouse-ear cress).